Reading from the N-terminus, the 330-residue chain is Glycerol-3-phosphate dehydrogenase [NAD(P)+] (330 aa).

Residues Ser-11, Phe-12, Arg-32, and Lys-106 each coordinate NADPH. Sn-glycerol 3-phosphate-binding residues include Lys-106, Gly-133, and Ser-135. Position 137 (Ala-137) interacts with NADPH. Residues Lys-188, Asp-241, Ser-251, Arg-252, and Asn-253 each contribute to the sn-glycerol 3-phosphate site. The active-site Proton acceptor is the Lys-188. Residue Arg-252 coordinates NADPH. 2 residues coordinate NADPH: Val-276 and Glu-278.

The protein belongs to the NAD-dependent glycerol-3-phosphate dehydrogenase family.

It localises to the cytoplasm. The enzyme catalyses sn-glycerol 3-phosphate + NAD(+) = dihydroxyacetone phosphate + NADH + H(+). It catalyses the reaction sn-glycerol 3-phosphate + NADP(+) = dihydroxyacetone phosphate + NADPH + H(+). Its pathway is membrane lipid metabolism; glycerophospholipid metabolism. Catalyzes the reduction of the glycolytic intermediate dihydroxyacetone phosphate (DHAP) to sn-glycerol 3-phosphate (G3P), the key precursor for phospholipid synthesis. The sequence is that of Glycerol-3-phosphate dehydrogenase [NAD(P)+] from Clostridium botulinum (strain Eklund 17B / Type B).